The chain runs to 356 residues: UDP-N-acetylglucosamine--N-acetylmuramyl-(pentapeptide) pyrophosphoryl-undecaprenol N-acetylglucosamine transferase (356 aa).

UDP-N-acetyl-alpha-D-glucosamine contacts are provided by residues 15 to 17 (TGG), Asn-127, Arg-163, Ser-191, Ile-244, 263 to 268 (ALTVSE), and Gln-288.

The protein belongs to the glycosyltransferase 28 family. MurG subfamily.

The protein resides in the cell inner membrane. The enzyme catalyses di-trans,octa-cis-undecaprenyl diphospho-N-acetyl-alpha-D-muramoyl-L-alanyl-D-glutamyl-meso-2,6-diaminopimeloyl-D-alanyl-D-alanine + UDP-N-acetyl-alpha-D-glucosamine = di-trans,octa-cis-undecaprenyl diphospho-[N-acetyl-alpha-D-glucosaminyl-(1-&gt;4)]-N-acetyl-alpha-D-muramoyl-L-alanyl-D-glutamyl-meso-2,6-diaminopimeloyl-D-alanyl-D-alanine + UDP + H(+). It functions in the pathway cell wall biogenesis; peptidoglycan biosynthesis. In terms of biological role, cell wall formation. Catalyzes the transfer of a GlcNAc subunit on undecaprenyl-pyrophosphoryl-MurNAc-pentapeptide (lipid intermediate I) to form undecaprenyl-pyrophosphoryl-MurNAc-(pentapeptide)GlcNAc (lipid intermediate II). The chain is UDP-N-acetylglucosamine--N-acetylmuramyl-(pentapeptide) pyrophosphoryl-undecaprenol N-acetylglucosamine transferase from Yersinia pseudotuberculosis serotype O:1b (strain IP 31758).